The sequence spans 248 residues: tRNA pseudouridine synthase A (248 aa).

D53 (nucleophile) is an active-site residue. Y111 is a binding site for substrate.

It belongs to the tRNA pseudouridine synthase TruA family. Homodimer.

It catalyses the reaction uridine(38/39/40) in tRNA = pseudouridine(38/39/40) in tRNA. Functionally, formation of pseudouridine at positions 38, 39 and 40 in the anticodon stem and loop of transfer RNAs. In Listeria monocytogenes serotype 4a (strain HCC23), this protein is tRNA pseudouridine synthase A.